The following is a 620-amino-acid chain: Probably inactive leucine-rich repeat receptor-like protein kinase At5g48380 (620 aa).

Positions 1-27 (MMMGRLVFVIWLYNCLCLLLLSSLVDA) are cleaved as a signal peptide. Residues 28–228 (DQANIDCLRT…SASSSRGKVV (201 aa)) lie on the Extracellular side of the membrane. Residues N56, N111, N119, and N147 are each glycosylated (N-linked (GlcNAc...) asparagine). 4 LRR repeats span residues 101–124 (DLTGLDLSRNNFSGPLPANISTLI), 126–148 (LVTILDLSYNSFSGEIPMLISNI), 150–172 (FLNTLMLQHNQFTGTLPPQLAQL), and 174–196 (RLKTFSVSDNRLVGPIPNFNQTL). N-linked (GlcNAc...) asparagine glycosylation occurs at N193. Residues 229–249 (IIAAVGGLTAAALVVGVVLFF) form a helical membrane-spanning segment. The Cytoplasmic segment spans residues 250-620 (YFRKLGAVRK…DFIEELIVAR (371 aa)). T300 carries the post-translational modification Phosphothreonine. A Protein kinase domain is found at 303 to 596 (FKKDNIIATG…RAIGESYNFT (294 aa)). Residues 309–317 (IATGRTGTM) and K331 contribute to the ATP site. At T463 the chain carries Phosphothreonine. Y479 is subject to Phosphotyrosine. T482 bears the Phosphothreonine mark.

This sequence belongs to the protein kinase superfamily. Ser/Thr protein kinase family.

It is found in the cell membrane. This Arabidopsis thaliana (Mouse-ear cress) protein is Probably inactive leucine-rich repeat receptor-like protein kinase At5g48380.